The chain runs to 310 residues: Dopamine receptor-interacting protein 1 (310 aa).

In terms of assembly, interacts with DRD1.

Its function is as follows. Could be a regulator of the dopamine receptor signaling pathway. The sequence is that of Dopamine receptor-interacting protein 1 from Homo sapiens (Human).